The following is a 322-amino-acid chain: Carnosine N-methyltransferase 2 (322 aa).

E58 lines the substrate pocket. Residues G90, E119, S150, and I172 each contribute to the S-adenosyl-L-methionine site. N313 provides a ligand contact to substrate.

It belongs to the class I-like SAM-binding methyltransferase superfamily. HNMT family. Monomer.

The catalysed reaction is carnosine + S-adenosyl-L-methionine = anserine + S-adenosyl-L-homocysteine + H(+). In terms of biological role, N-methyltransferase that mediates the formation of anserine (beta-alanyl-N(Pi)-methyl-L-histidine) from carnosine. Anserine, a methylated derivative of carnosine (beta-alanyl-L-histidine), is an abundant constituent of vertebrate skeletal muscles. The chain is Carnosine N-methyltransferase 2 from Gallus gallus (Chicken).